Reading from the N-terminus, the 405-residue chain is MIIHPKVRGFICTTTHPLGCERNVLEQIAATRARGVRNDGPKKVLVIGASSGYGLASRITAAFGFGADTLGVFFEKPGTASKAGTAGWYNSAAFDKHAKAAGLYSKSINGDAFSDAARAQVIELIKTEMGGQVDLVVYSLASPVRKLPGSGEVKRSALKPIGQTYTATAIDTNKDTIIQASIEPASAQEIEDTITVMGGQDWELWIDALEGAGVLADGARSVAFSYIGTEITWPIYWHGALGKAKVDLDRTAQRLNARLAKHGGGANVAVLKSVVTQASAAIPVMPLYISMVYKIMKEKGLHEGTIEQLDRLFRERLYRQDGQPAEVDEVDEQNRLRLDDWELRDDVQDACKALWPQVTTENLFELTDYAGYKHEFLKLFGFGRTDVDYDADVATDVAFDCIELV.

NAD(+) is bound by residues G48 to Y53, F74 to E75, D111 to A112, and L140 to A141. Y226 lines the substrate pocket. Y236 functions as the Proton donor in the catalytic mechanism. Residues K245 and V274–T276 each bind NAD(+).

It belongs to the TER reductase family. Monomer.

It carries out the reaction a 2,3-saturated acyl-[ACP] + NAD(+) = a (2E)-enoyl-[ACP] + NADH + H(+). It participates in lipid metabolism; fatty acid biosynthesis. Its function is as follows. Involved in the final reduction of the elongation cycle of fatty acid synthesis (FAS II). Catalyzes the reduction of a carbon-carbon double bond in an enoyl moiety that is covalently linked to an acyl carrier protein (ACP). In Xanthomonas oryzae pv. oryzae (strain PXO99A), this protein is Enoyl-[acyl-carrier-protein] reductase [NADH].